The sequence spans 419 residues: Multiple organellar RNA editing factor 1, mitochondrial (419 aa).

The N-terminal 60 residues, Met1–Leu60, are a transit peptide targeting the mitochondrion. The segment at Lys174 to Arg401 is disordered. The span at Gly237–Gln252 shows a compositional bias: low complexity. The segment covering Gly310–Gln327 has biased composition (gly residues). The span at Gly342–Ala356 shows a compositional bias: low complexity. The span at Gly357–Gly367 shows a compositional bias: gly residues. Over residues Glu371 to Arg401 the composition is skewed to polar residues.

Belongs to the MORF family. In terms of assembly, homodimer and heterodimer with MORF3. Heterodimers with MORF8/RIP1, MORF4/RIP4 and MORF6/RIP6. Interacts with PCMP-E90/MEF13. Interacts with PCMP-H13/MEF35.

The protein localises to the mitochondrion. Involved in organellar RNA editing. Required for the processing of numerous RNA editing sites in mitochondria. Binds to the mitochondrial MEF19 and MEF21 factors, two pentatricopeptide repeat-containing proteins involved in RNA editing. This is Multiple organellar RNA editing factor 1, mitochondrial from Arabidopsis thaliana (Mouse-ear cress).